Here is a 560-residue protein sequence, read N- to C-terminus: NAD-dependent malic enzyme (560 aa).

Tyr-100 (proton donor) is an active-site residue. Residue Arg-153 participates in NAD(+) binding. Residue Lys-171 is the Proton acceptor of the active site. A divalent metal cation-binding residues include Glu-242, Asp-243, and Asp-266. The NAD(+) site is built by Asp-266 and Asn-413.

It belongs to the malic enzymes family. Homotetramer. It depends on Mg(2+) as a cofactor. Requires Mn(2+) as cofactor.

It catalyses the reaction (S)-malate + NAD(+) = pyruvate + CO2 + NADH. It carries out the reaction oxaloacetate + H(+) = pyruvate + CO2. This chain is NAD-dependent malic enzyme, found in Psychrobacter arcticus (strain DSM 17307 / VKM B-2377 / 273-4).